Here is a 397-residue protein sequence, read N- to C-terminus: 1-deoxy-D-xylulose 5-phosphate reductoisomerase (397 aa).

NADPH is bound by residues T12, G13, S14, I15, G38, K39, N40, and N126. K127 serves as a coordination point for 1-deoxy-D-xylulose 5-phosphate. An NADPH-binding site is contributed by E128. Residue D152 coordinates Mn(2+). Residues S153, E154, S188, and H211 each contribute to the 1-deoxy-D-xylulose 5-phosphate site. E154 contacts Mn(2+). G217 is an NADPH binding site. Residues S224, N229, K230, and E233 each coordinate 1-deoxy-D-xylulose 5-phosphate. E233 is a Mn(2+) binding site.

Belongs to the DXR family. The cofactor is Mg(2+). Requires Mn(2+) as cofactor.

It carries out the reaction 2-C-methyl-D-erythritol 4-phosphate + NADP(+) = 1-deoxy-D-xylulose 5-phosphate + NADPH + H(+). It participates in isoprenoid biosynthesis; isopentenyl diphosphate biosynthesis via DXP pathway; isopentenyl diphosphate from 1-deoxy-D-xylulose 5-phosphate: step 1/6. In terms of biological role, catalyzes the NADPH-dependent rearrangement and reduction of 1-deoxy-D-xylulose-5-phosphate (DXP) to 2-C-methyl-D-erythritol 4-phosphate (MEP). This chain is 1-deoxy-D-xylulose 5-phosphate reductoisomerase, found in Haemophilus influenzae (strain PittGG).